The sequence spans 396 residues: Cell division protein DivIB (396 aa).

2 disordered regions span residues 1–23 and 37–116; these read MSKDKKNEDKETLEELKELSEWQ and EVAL…ATKE. The Cytoplasmic portion of the chain corresponds to 1–130; it reads MSKDKKNEDK…AKIPGIHILR (130 aa). 2 stretches are compositionally biased toward basic and acidic residues: residues 37–65 and 75–116; these read EVALAEEKEKERQARMGEESEKSEDKQDQ and ESAK…ATKE. Residues 131-151 traverse the membrane as a helical segment; it reads AFTILFPSLLLLIVSAYLLSP. Residues 152–396 lie on the Extracellular side of the membrane; the sequence is YATMKDIRVE…NQTNQRSSRR (245 aa). The POTRA domain maps to 153 to 223; sequence ATMKDIRVEG…TKFTIKVKEY (71 aa). A compositionally biased stretch (basic and acidic residues) spans 361 to 385; it reads KAKQEAKEAEKKQEEEQKKQEEESN. The interval 361-396 is disordered; that stretch reads KAKQEAKEAEKKQEEEQKKQEEESNRNQTNQRSSRR. A compositionally biased stretch (low complexity) spans 386-396; sequence RNQTNQRSSRR.

Belongs to the FtsQ/DivIB family. DivIB subfamily.

It is found in the cell membrane. Cell division protein that may be involved in stabilizing or promoting the assembly of the division complex. The protein is Cell division protein DivIB of Streptococcus pneumoniae (strain ATCC BAA-255 / R6).